The following is a 366-amino-acid chain: Quinolinate synthase (366 aa).

Residues H44 and S61 each coordinate iminosuccinate. A [4Fe-4S] cluster-binding site is contributed by C108. Iminosuccinate contacts are provided by residues 139–141 and S160; that span reads YVN. C228 lines the [4Fe-4S] cluster pocket. Residues 254–256 and T271 each bind iminosuccinate; that span reads HPE. C318 provides a ligand contact to [4Fe-4S] cluster.

It belongs to the quinolinate synthase family. Type 3 subfamily. Requires [4Fe-4S] cluster as cofactor.

Its subcellular location is the cytoplasm. It catalyses the reaction iminosuccinate + dihydroxyacetone phosphate = quinolinate + phosphate + 2 H2O + H(+). Its pathway is cofactor biosynthesis; NAD(+) biosynthesis; quinolinate from iminoaspartate: step 1/1. Catalyzes the condensation of iminoaspartate with dihydroxyacetone phosphate to form quinolinate. The chain is Quinolinate synthase from Staphylococcus carnosus (strain TM300).